A 270-amino-acid chain; its full sequence is Putative pyruvate, phosphate dikinase regulatory protein 2 (270 aa).

151–158 contacts ADP; sequence GVSRTSKT.

Belongs to the pyruvate, phosphate/water dikinase regulatory protein family. PDRP subfamily.

It catalyses the reaction N(tele)-phospho-L-histidyl/L-threonyl-[pyruvate, phosphate dikinase] + ADP = N(tele)-phospho-L-histidyl/O-phospho-L-threonyl-[pyruvate, phosphate dikinase] + AMP + H(+). The enzyme catalyses N(tele)-phospho-L-histidyl/O-phospho-L-threonyl-[pyruvate, phosphate dikinase] + phosphate + H(+) = N(tele)-phospho-L-histidyl/L-threonyl-[pyruvate, phosphate dikinase] + diphosphate. Bifunctional serine/threonine kinase and phosphorylase involved in the regulation of the pyruvate, phosphate dikinase (PPDK) by catalyzing its phosphorylation/dephosphorylation. This is Putative pyruvate, phosphate dikinase regulatory protein 2 from Listeria welshimeri serovar 6b (strain ATCC 35897 / DSM 20650 / CCUG 15529 / CIP 8149 / NCTC 11857 / SLCC 5334 / V8).